The following is a 139-amino-acid chain: Probable cytochrome b5 (139 aa).

The region spanning 2-78 (SAEFTYQDVA…LEPLLVGTLK (77 aa)) is the Cytochrome b5 heme-binding domain. Residues H37 and H61 each contribute to the heme site. Residues 105-125 (GLGIGLYAVLVLGGLAGFAAY) traverse the membrane as a helical segment.

This sequence belongs to the cytochrome b5 family.

It localises to the endoplasmic reticulum membrane. Its subcellular location is the microsome membrane. Functionally, membrane bound hemoprotein which function as an electron carrier for several membrane bound oxygenases. This is Probable cytochrome b5 from Neurospora crassa (strain ATCC 24698 / 74-OR23-1A / CBS 708.71 / DSM 1257 / FGSC 987).